The primary structure comprises 327 residues: Lipoyl synthase (327 aa).

[4Fe-4S] cluster contacts are provided by C66, C71, C77, C92, C96, C99, and S306. A Radical SAM core domain is found at 78–295 (FSKGTATFMI…EKEAYELGFS (218 aa)).

Belongs to the radical SAM superfamily. Lipoyl synthase family. The cofactor is [4Fe-4S] cluster.

The protein localises to the cytoplasm. It catalyses the reaction [[Fe-S] cluster scaffold protein carrying a second [4Fe-4S](2+) cluster] + N(6)-octanoyl-L-lysyl-[protein] + 2 oxidized [2Fe-2S]-[ferredoxin] + 2 S-adenosyl-L-methionine + 4 H(+) = [[Fe-S] cluster scaffold protein] + N(6)-[(R)-dihydrolipoyl]-L-lysyl-[protein] + 4 Fe(3+) + 2 hydrogen sulfide + 2 5'-deoxyadenosine + 2 L-methionine + 2 reduced [2Fe-2S]-[ferredoxin]. It participates in protein modification; protein lipoylation via endogenous pathway; protein N(6)-(lipoyl)lysine from octanoyl-[acyl-carrier-protein]: step 2/2. Catalyzes the radical-mediated insertion of two sulfur atoms into the C-6 and C-8 positions of the octanoyl moiety bound to the lipoyl domains of lipoate-dependent enzymes, thereby converting the octanoylated domains into lipoylated derivatives. The chain is Lipoyl synthase from Neisseria meningitidis serogroup B (strain ATCC BAA-335 / MC58).